A 503-amino-acid polypeptide reads, in one-letter code: UDP-N-acetylmuramoylalanine--D-glutamate ligase (503 aa).

An ATP-binding site is contributed by 129-135 (GTNGKTT). A disordered region spans residues 284-305 (DSEAEGEGKPRRRKADATAQEA).

Belongs to the MurCDEF family.

It localises to the cytoplasm. It catalyses the reaction UDP-N-acetyl-alpha-D-muramoyl-L-alanine + D-glutamate + ATP = UDP-N-acetyl-alpha-D-muramoyl-L-alanyl-D-glutamate + ADP + phosphate + H(+). The protein operates within cell wall biogenesis; peptidoglycan biosynthesis. In terms of biological role, cell wall formation. Catalyzes the addition of glutamate to the nucleotide precursor UDP-N-acetylmuramoyl-L-alanine (UMA). In Cupriavidus pinatubonensis (strain JMP 134 / LMG 1197) (Cupriavidus necator (strain JMP 134)), this protein is UDP-N-acetylmuramoylalanine--D-glutamate ligase.